We begin with the raw amino-acid sequence, 271 residues long: Glutamate racemase (271 aa).

Substrate is bound by residues 12-13 and 44-45; these read DS and YG. Residue cysteine 75 is the Proton donor/acceptor of the active site. 76–77 contributes to the substrate binding site; sequence NT. Residue cysteine 185 is the Proton donor/acceptor of the active site. 186-187 contributes to the substrate binding site; that stretch reads TH.

This sequence belongs to the aspartate/glutamate racemases family.

The enzyme catalyses L-glutamate = D-glutamate. It participates in cell wall biogenesis; peptidoglycan biosynthesis. Functionally, provides the (R)-glutamate required for cell wall biosynthesis. The polypeptide is Glutamate racemase (Methylococcus capsulatus (strain ATCC 33009 / NCIMB 11132 / Bath)).